Here is a 970-residue protein sequence, read N- to C-terminus: Type III restriction-modification enzyme EcoP15I Res subunit (970 aa).

A helicase-like domain region spans residues 75 to 540 (AKSNIIDVSM…EVGRGLRLPV (466 aa)). Residues T91, G122, F126, and D226 each contribute to the AMP site. The tract at residues 894-918 (TYSPDFAYVVKTAEGDYLNFIIETK) is endonuclease domain.

This sequence belongs to the type III restriction-modification system Res protein family. In terms of assembly, a heterotetramer with stoichiometry Res(2)Mod(2). A heterotrimer with stoichiometry Res(1)Mod(2). It depends on Mg(2+) as a cofactor. S-adenosyl-L-methionine serves as cofactor.

The enzyme catalyses Endonucleolytic cleavage of DNA to give specific double-stranded fragments with terminal 5'-phosphates.. Its function is as follows. A type III restriction enzyme that recognizes 2 inversely oriented double-stranded sequences 5'-CAGCAG-3' and cleaves DNA 25-27 base pairs downstream of one site. DNA restriction requires both the Res and Mod subunits. DNA topology affects its action; relaxed and negatively supercoiled DNA are digested but positively supercoiled DNA is not a good substrate. Interacts with DNA approximately one half-turn downstream of the recognition site. After binding to one recognition site undergoes random one-dimensional diffusion along DNA until it collides with a stationary enzyme bound to the second DNA site, which is when DNA cleavage occurs. The sequence is that of Type III restriction-modification enzyme EcoP15I Res subunit from Escherichia coli.